Here is a 927-residue protein sequence, read N- to C-terminus: Transmembrane protein 132 homolog (927 aa).

The N-terminal stretch at 1–18 (MLKKLWICISCIVTTALS) is a signal peptide. Residues 749–769 (FHIFVLTIIGLIILFLFISFV) traverse the membrane as a helical segment. Positions 789–842 (LSSSSGSNSRQEETNEWVWLSQPQPPSSTISSGYSGNKSTAERQSSNGDDPSRT) are disordered. Over residues 817-842 (TISSGYSGNKSTAERQSSNGDDPSRT) the composition is skewed to polar residues.

The protein belongs to the TMEM132 family. As to quaternary structure, interacts with gex-3. In terms of tissue distribution, specifically expressed in neurons.

The protein resides in the membrane. Regulates neuronal morphology via inhibition of the WAVE regulatory complex (WCR), a complex that controls F-actin cytoskeletal dynamics. The chain is Transmembrane protein 132 homolog from Caenorhabditis elegans.